A 244-amino-acid polypeptide reads, in one-letter code: MTRVLLLGGTAEGRALAKELHPHVEIVSSLAGRVPNPALPIGPVRIGGFGGVEGLRGWLREERIDAVVDATHPFAVTITAHAAQVCGELGLPYLVLARPPWDPGTAIIAVSDIEAADVVAEQGYSRVFLTTGRSGIAAFANSDAWFLIRVVTAPDGTALPRRHKLVLSRGPYGYHDEFALLREQRIDALVTKNSGGKMTRAKLDAAAALGISVVMIARPLLPAGVAAVDSVHRAAMWVAGLPSR.

Belongs to the precorrin-6x reductase family.

The catalysed reaction is precorrin-6B + NADP(+) = precorrin-6A + NADPH + 2 H(+). It participates in cofactor biosynthesis; adenosylcobalamin biosynthesis; cob(II)yrinate a,c-diamide from precorrin-2 (aerobic route): step 6/10. Its function is as follows. Catalyzes the reduction of the macrocycle of precorrin-6X into precorrin-6Y. This chain is Precorrin-6A reductase (cobK), found in Mycobacterium tuberculosis (strain CDC 1551 / Oshkosh).